Here is a 107-residue protein sequence, read N- to C-terminus: Nucleoid-associated protein R00231 (107 aa).

The protein belongs to the YbaB/EbfC family. As to quaternary structure, homodimer.

The protein resides in the cytoplasm. Its subcellular location is the nucleoid. Functionally, binds to DNA and alters its conformation. May be involved in regulation of gene expression, nucleoid organization and DNA protection. This is Nucleoid-associated protein R00231 from Rhizobium meliloti (strain 1021) (Ensifer meliloti).